A 379-amino-acid chain; its full sequence is Fructose-1,6-bisphosphate aldolase/phosphatase (379 aa).

The active-site Proton acceptor; for FBP phosphatase activity is Asp13. Mg(2+)-binding residues include Asp13, His20, Asp51, and Asp52. His20 is a beta-D-fructose 1,6-bisphosphate binding site. Dihydroxyacetone phosphate is bound at residue His20. Position 89 (Tyr89) interacts with beta-D-fructose 1,6-bisphosphate. Gln93 provides a ligand contact to Mg(2+). 102 to 103 (GN) is a beta-D-fructose 1,6-bisphosphate binding site. Asp130 contributes to the Mg(2+) binding site. Lys131 lines the beta-D-fructose 1,6-bisphosphate pocket. Lys131 is a dihydroxyacetone phosphate binding site. Residue Tyr227 is the Proton donor/acceptor; for FBP aldolase activity of the active site. Residues Lys230, Asp231, and Asp232 each contribute to the Mg(2+) site. Lys230 functions as the Schiff-base intermediate with DHAP; for FBP aldolase activity in the catalytic mechanism. Residues 240–241 (QS), Arg264, Asp285, and Tyr346 contribute to the beta-D-fructose 1,6-bisphosphate site. Arg264 and Asp285 together coordinate dihydroxyacetone phosphate.

The protein belongs to the FBP aldolase/phosphatase family. As to quaternary structure, homooctamer; dimer of tetramers. It depends on Mg(2+) as a cofactor.

The enzyme catalyses beta-D-fructose 1,6-bisphosphate + H2O = beta-D-fructose 6-phosphate + phosphate. The catalysed reaction is beta-D-fructose 1,6-bisphosphate = D-glyceraldehyde 3-phosphate + dihydroxyacetone phosphate. It participates in carbohydrate biosynthesis; gluconeogenesis. Catalyzes two subsequent steps in gluconeogenesis: the aldol condensation of dihydroxyacetone phosphate (DHAP) and glyceraldehyde-3-phosphate (GA3P) to fructose-1,6-bisphosphate (FBP), and the dephosphorylation of FBP to fructose-6-phosphate (F6P). This chain is Fructose-1,6-bisphosphate aldolase/phosphatase, found in Moorella thermoacetica (strain ATCC 39073 / JCM 9320).